The sequence spans 662 residues: Aprataxin-like protein (662 aa).

Residues 4 to 108 (SSALIKDISK…ISKDFVSTSL (105 aa)) form the HIT domain. A C2H2-type zinc finger spans residues 381–403 (LRCNQCEFVTNMLLDLKAHLYQH). The disordered stretch occupies residues 482-662 (KNINGPSVNM…PAPPSNSKPS (181 aa)). Over residues 490–500 (NMMNQNNPNNP) the composition is skewed to low complexity. Composition is skewed to polar residues over residues 501-513 (FRNTPHLNRQSQK) and 560-569 (GHQQFPNASS). The segment covering 570-582 (VGGGQTGLPGQGQ) has biased composition (gly residues). Over residues 588–599 (WNSNKIFNQQNR) the composition is skewed to polar residues. The segment covering 600-626 (QNTVQAQPQAQNQQTNQQQIQNSNKNQ) has biased composition (low complexity). Pro residues predominate over residues 653-662 (PAPPSNSKPS).

The protein localises to the nucleus. In terms of biological role, DNA-binding protein involved in single-strand DNA break repair, double-strand DNA break repair and base excision repair. Resolves abortive DNA ligation intermediates formed either at base excision sites, or when DNA ligases attempt to repair non-ligatable breaks induced by reactive oxygen species. Catalyzes the release of adenylate groups covalently linked to 5'-phosphate termini, resulting in the production of 5'-phosphate termini that can be efficiently rejoined. The protein is Aprataxin-like protein of Drosophila melanogaster (Fruit fly).